The following is a 156-amino-acid chain: Probable succinate transporter subunit YjjB (156 aa).

Transmembrane regions (helical) follow at residues 7 to 27 (WALLQDMVLAAVPALGFAMVF), 54 to 74 (FGMNIEWASFLAAILIGIIGI), 86 to 106 (VFTVAAVIPMFPGISAYTAMI), and 128 to 148 (FLKASFIVGALSIGLSLPGIW).

It belongs to the ThrE exporter (TC 2.A.79) family. As to quaternary structure, the transporter is composed of YjjB and YjjP.

The protein resides in the cell inner membrane. Functionally, involved in succinate export with YjjP. Both proteins are required for export. The chain is Probable succinate transporter subunit YjjB from Pectobacterium atrosepticum (strain SCRI 1043 / ATCC BAA-672) (Erwinia carotovora subsp. atroseptica).